The sequence spans 572 residues: Glypican-5 (572 aa).

Residues 1 to 24 form the signal peptide; sequence MDARTWRLGWRCLLLLALLGSTRS. N-linked (GlcNAc...) asparagine glycosylation is found at Asn120 and Asn237. Residue Ser486 is glycosylated (O-linked (Xyl...) (glycosaminoglycan) serine). The N-linked (GlcNAc...) asparagine glycan is linked to Asn493. Residues Ser495, Ser507, and Ser509 are each glycosylated (O-linked (Xyl...) (glycosaminoglycan) serine). A glycan (N-linked (GlcNAc...) asparagine) is linked at Asn527.

Belongs to the glypican family.

It localises to the cell membrane. Its subcellular location is the secreted. The protein resides in the extracellular space. Cell surface proteoglycan that bears heparan sulfate. This is Glypican-5 (Gpc5) from Mus musculus (Mouse).